Consider the following 72-residue polypeptide: Translation initiation factor IF-1 1 (72 aa).

The S1-like domain occupies 1–72; it reads MAKDDVIQMQ…SRARIVFRAK (72 aa).

It belongs to the IF-1 family. Component of the 30S ribosomal translation pre-initiation complex which assembles on the 30S ribosome in the order IF-2 and IF-3, IF-1 and N-formylmethionyl-tRNA(fMet); mRNA recruitment can occur at any time during PIC assembly.

It localises to the cytoplasm. In terms of biological role, one of the essential components for the initiation of protein synthesis. Stabilizes the binding of IF-2 and IF-3 on the 30S subunit to which N-formylmethionyl-tRNA(fMet) subsequently binds. Helps modulate mRNA selection, yielding the 30S pre-initiation complex (PIC). Upon addition of the 50S ribosomal subunit IF-1, IF-2 and IF-3 are released leaving the mature 70S translation initiation complex. The chain is Translation initiation factor IF-1 1 from Ralstonia nicotianae (strain ATCC BAA-1114 / GMI1000) (Ralstonia solanacearum).